A 750-amino-acid polypeptide reads, in one-letter code: Photosystem I P700 chlorophyll a apoprotein A1 (750 aa).

The next 8 membrane-spanning stretches (helical) occupy residues 70–93 (VFSA…FHGA), 156–179 (LYCT…FHYH), 195–219 (LNHH…HVSL), 291–309 (IAHH…GHMY), 346–369 (WHAQ…HHMY), 385–411 (LSLF…IFMV), 433–455 (AIIS…LYIH), and 531–549 (FLVH…LILL). Cys573 and Cys582 together coordinate [4Fe-4S] cluster. 2 helical membrane-spanning segments follow: residues 589–610 (HVFL…HFSW) and 664–686 (LSAY…MFLF). His675 is a chlorophyll a' binding site. Residues Met683 and Tyr691 each contribute to the chlorophyll a site. Residue Trp692 participates in phylloquinone binding. A helical transmembrane segment spans residues 724–744 (AVGVTHYLLGGIATTWAFFLA).

This sequence belongs to the PsaA/PsaB family. The PsaA/B heterodimer binds the P700 chlorophyll special pair and subsequent electron acceptors. PSI consists of a core antenna complex that captures photons, and an electron transfer chain that converts photonic excitation into a charge separation. The eukaryotic PSI reaction center is composed of at least 11 subunits. P700 is a chlorophyll a/chlorophyll a' dimer, A0 is one or more chlorophyll a, A1 is one or both phylloquinones and FX is a shared 4Fe-4S iron-sulfur center. is required as a cofactor.

It is found in the plastid. It localises to the chloroplast thylakoid membrane. The enzyme catalyses reduced [plastocyanin] + hnu + oxidized [2Fe-2S]-[ferredoxin] = oxidized [plastocyanin] + reduced [2Fe-2S]-[ferredoxin]. PsaA and PsaB bind P700, the primary electron donor of photosystem I (PSI), as well as the electron acceptors A0, A1 and FX. PSI is a plastocyanin-ferredoxin oxidoreductase, converting photonic excitation into a charge separation, which transfers an electron from the donor P700 chlorophyll pair to the spectroscopically characterized acceptors A0, A1, FX, FA and FB in turn. Oxidized P700 is reduced on the lumenal side of the thylakoid membrane by plastocyanin. This Calycanthus floridus var. glaucus (Eastern sweetshrub) protein is Photosystem I P700 chlorophyll a apoprotein A1.